The sequence spans 688 residues: NADH-ubiquinone oxidoreductase 75 kDa subunit (688 aa).

The region spanning Met-1 to Glu-85 is the 2Fe-2S ferredoxin-type domain. Positions 38, 49, 52, and 66 each coordinate [2Fe-2S] cluster. The 40-residue stretch at Glu-85–Gly-124 folds into the 4Fe-4S His(Cys)3-ligated-type domain. Residues His-101, Cys-105, Cys-108, Cys-114, Cys-153, Cys-156, Cys-159, and Cys-204 each contribute to the [4Fe-4S] cluster site. A 4Fe-4S Mo/W bis-MGD-type domain is found at Leu-223–Glu-279.

Belongs to the complex I 75 kDa subunit family. As to quaternary structure, complex I is composed of about 45 different subunits. The cofactor is [2Fe-2S] cluster. Requires [4Fe-4S] cluster as cofactor.

It is found in the mitochondrion inner membrane. The enzyme catalyses a ubiquinone + NADH + 5 H(+)(in) = a ubiquinol + NAD(+) + 4 H(+)(out). Its function is as follows. Core subunit of the mitochondrial membrane respiratory chain NADH dehydrogenase (Complex I) that is believed to belong to the minimal assembly required for catalysis. Complex I functions in the transfer of electrons from NADH to the respiratory chain. The immediate electron acceptor for the enzyme is believed to be ubiquinone. This is the largest subunit of complex I and it is a component of the iron-sulfur (IP) fragment of the enzyme. It may form part of the active site crevice where NADH is oxidized. This is NADH-ubiquinone oxidoreductase 75 kDa subunit (nad11) from Dictyostelium citrinum (Slime mold).